The primary structure comprises 493 residues: Envelope glycoprotein gp63 (493 aa).

Residues M1–G22 form the signal peptide. Topologically, residues N23–L446 are extracellular. N-linked (GlcNAc...) asparagine; by host glycans are attached at residues N140 and N222. The CXXC motif lies at C225–C228. Intrachain disulfides connect C225–C228, C225–C404, and C396–C403. N292 carries an N-linked (GlcNAc...) asparagine; by host glycan. The fusion peptide stretch occupies residues A316 to G336. Coiled coils occupy residues A344–W390 and Q400–L432. Residues A379 to L395 form an immunosuppression region. Residues C396–C404 carry the CX6CC motif. The N-linked (GlcNAc...) asparagine; by host glycan is linked to N407. The helical transmembrane segment at Q447 to I467 threads the bilayer. C465 carries the S-palmitoyl cysteine; by host lipid modification. Over R468 to L493 the chain is Cytoplasmic.

As to quaternary structure, the mature envelope protein (Env) consists of a trimer of SU-TM heterodimers attached by a labile interchain disulfide bond. Specific enzymatic cleavages in vivo yield mature proteins. Envelope glycoproteins are synthesized as an inactive precursor that is N-glycosylated and processed likely by host cell furin or by a furin-like protease in the Golgi to yield the mature SU and TM proteins. The cleavage site between SU and TM requires the minimal sequence [KR]-X-[KR]-R. In terms of processing, the CXXC motif is highly conserved across a broad range of retroviral envelope proteins. It is thought to participate in the formation of a labile disulfide bond possibly with the CX6CC motif present in the transmembrane protein. Isomerization of the intersubunit disulfide bond to an SU intrachain disulfide bond is thought to occur upon receptor recognition in order to allow membrane fusion. Post-translationally, the transmembrane protein is palmitoylated.

It is found in the virion membrane. The protein localises to the host cell membrane. Functionally, the surface protein (SU) attaches the virus to the host cell by binding to its receptor. This interaction triggers the refolding of the transmembrane protein (TM) and is thought to activate its fusogenic potential by unmasking its fusion peptide. Fusion occurs at the host cell plasma membrane. Its function is as follows. The transmembrane protein (TM) acts as a class I viral fusion protein. Under the current model, the protein has at least 3 conformational states: pre-fusion native state, pre-hairpin intermediate state, and post-fusion hairpin state. During viral and target cell membrane fusion, the coiled coil regions (heptad repeats) assume a trimer-of-hairpins structure, positioning the fusion peptide in close proximity to the C-terminal region of the ectodomain. The formation of this structure appears to drive apposition and subsequent fusion of viral and target cell membranes. Membranes fusion leads to delivery of the nucleocapsid into the cytoplasm. This is Envelope glycoprotein gp63 (env) from Human T-cell leukemia virus 3 (strain Pyl43) (HTLV-3).